A 244-amino-acid polypeptide reads, in one-letter code: UL16-binding protein 1 (244 aa).

Residues 1 to 25 (MAAAASPAFLLCLPLLHLLSGWSRA) form the signal peptide. The interval 26 to 117 (GWVDTHCLCY…IQVENLIPIE (92 aa)) is MHC class I alpha-1 like. A disulfide bond links cysteine 50 and cysteine 66. Asparagine 82 carries N-linked (GlcNAc...) asparagine glycosylation. The interval 118–208 (PLTLQARMSC…MYWEQMLDPT (91 aa)) is MHC class I alpha-2 like. Cysteine 127 and cysteine 190 are disulfide-bonded. Glycine 216 carries GPI-anchor amidated glycine lipidation. A propeptide spans 217-244 (TTQPKAMATTLSPWSLLIIFLCFILAGR) (removed in mature form).

Belongs to the MHC class I family. Interacts with KLRK1/NKG2D. Does not bind to beta2-microglobulin. As to quaternary structure, (Microbial infection) In CMV-infected cells, interacts with the viral glycoprotein UL16; this interaction causes ULBP1 retention in the endoplasmic reticulum and cis-Golgi and prevents binding to and activation of KLRK1/NKG2D, providing CMV with an immune evasion mechanism. In terms of tissue distribution, expressed in T-cells, B-cells, erythroleukemia cell lines and in a wide range of tissues including heart, brain, lung, liver, testis, lymph node, thymus, tonsil and bone marrow. Also found in fetal heart, brain, lung and liver.

The protein localises to the cell membrane. It localises to the endoplasmic reticulum. Binds and activates the KLRK1/NKG2D receptor, mediating natural killer cell cytotoxicity. In Homo sapiens (Human), this protein is UL16-binding protein 1 (ULBP1).